Here is a 234-residue protein sequence, read N- to C-terminus: Large ribosomal subunit protein uL1 (234 aa).

It belongs to the universal ribosomal protein uL1 family. In terms of assembly, part of the 50S ribosomal subunit.

In terms of biological role, binds directly to 23S rRNA. The L1 stalk is quite mobile in the ribosome, and is involved in E site tRNA release. Functionally, protein L1 is also a translational repressor protein, it controls the translation of the L11 operon by binding to its mRNA. This Edwardsiella ictaluri (strain 93-146) protein is Large ribosomal subunit protein uL1.